Consider the following 166-residue polypeptide: Protein SprT (166 aa).

Residues 19–164 form the SprT-like domain; it reads REHLAKANLK…CVHCGDLLVA (146 aa). His78 serves as a coordination point for Zn(2+). Glu79 is a catalytic residue. His82 is a Zn(2+) binding site.

The protein belongs to the SprT family. The cofactor is Zn(2+).

The protein localises to the cytoplasm. In Klebsiella pneumoniae (strain 342), this protein is Protein SprT.